Consider the following 43-residue polypeptide: U5-hexatoxin-Mr1a (43 aa).

Cystine bridges form between cysteine 1–cysteine 16, cysteine 8–cysteine 21, cysteine 15–cysteine 36, and cysteine 17–cysteine 43.

Belongs to the neurotoxin 35 family. In terms of processing, contains 4 disulfide bonds. Expressed by the venom gland.

It is found in the secreted. Its function is as follows. This toxin blocks the neuromuscular transmission, and also acts on muscle. It exerts an effect of first exciting and then inhibiting the contraction of muscle. This toxin is active only against mammals. This is U5-hexatoxin-Mr1a from Macrothele raveni (Funnel-web spider).